A 375-amino-acid chain; its full sequence is DNA replication and repair protein RecF (375 aa).

30–37 provides a ligand contact to ATP; the sequence is GDNAQGKS.

The protein belongs to the RecF family.

The protein localises to the cytoplasm. Functionally, the RecF protein is involved in DNA metabolism; it is required for DNA replication and normal SOS inducibility. RecF binds preferentially to single-stranded, linear DNA. It also seems to bind ATP. This chain is DNA replication and repair protein RecF, found in Gloeobacter violaceus (strain ATCC 29082 / PCC 7421).